The sequence spans 423 residues: Glutamate-1-semialdehyde 2,1-aminomutase (423 aa).

Lys263 is modified (N6-(pyridoxal phosphate)lysine).

This sequence belongs to the class-III pyridoxal-phosphate-dependent aminotransferase family. HemL subfamily. Requires pyridoxal 5'-phosphate as cofactor.

The protein localises to the cytoplasm. The catalysed reaction is (S)-4-amino-5-oxopentanoate = 5-aminolevulinate. The protein operates within porphyrin-containing compound metabolism; protoporphyrin-IX biosynthesis; 5-aminolevulinate from L-glutamyl-tRNA(Glu): step 2/2. This is Glutamate-1-semialdehyde 2,1-aminomutase from Ignicoccus hospitalis (strain KIN4/I / DSM 18386 / JCM 14125).